Consider the following 347-residue polypeptide: tRNA N6-adenosine threonylcarbamoyltransferase (347 aa).

Fe cation contacts are provided by His-110 and His-114. Residues 133–137 (VVSGG), Asp-168, Gly-181, Asp-185, and Asn-277 each bind substrate. A Fe cation-binding site is contributed by Asp-305.

This sequence belongs to the KAE1 / TsaD family. Fe(2+) is required as a cofactor.

Its subcellular location is the cytoplasm. It catalyses the reaction L-threonylcarbamoyladenylate + adenosine(37) in tRNA = N(6)-L-threonylcarbamoyladenosine(37) in tRNA + AMP + H(+). In terms of biological role, required for the formation of a threonylcarbamoyl group on adenosine at position 37 (t(6)A37) in tRNAs that read codons beginning with adenine. Is involved in the transfer of the threonylcarbamoyl moiety of threonylcarbamoyl-AMP (TC-AMP) to the N6 group of A37, together with TsaE and TsaB. TsaD likely plays a direct catalytic role in this reaction. The chain is tRNA N6-adenosine threonylcarbamoyltransferase from Kineococcus radiotolerans (strain ATCC BAA-149 / DSM 14245 / SRS30216).